A 148-amino-acid polypeptide reads, in one-letter code: Large ribosomal subunit protein bL27m (148 aa).

The N-terminal 30 residues, M1–H30, are a transit peptide targeting the mitochondrion. The disordered stretch occupies residues V28 to G48.

The protein belongs to the bacterial ribosomal protein bL27 family. Component of the mitochondrial ribosome large subunit (39S) which comprises a 16S rRNA and about 50 distinct proteins.

It is found in the mitochondrion. The sequence is that of Large ribosomal subunit protein bL27m (Mrpl27) from Mus musculus (Mouse).